Reading from the N-terminus, the 190-residue chain is UPF0301 protein Rmet_2743 (190 aa).

Belongs to the UPF0301 (AlgH) family.

The chain is UPF0301 protein Rmet_2743 from Cupriavidus metallidurans (strain ATCC 43123 / DSM 2839 / NBRC 102507 / CH34) (Ralstonia metallidurans).